The primary structure comprises 491 residues: Cytochrome P450 81F2 (491 aa).

A helical transmembrane segment spans residues Val283–Thr303. Cys429 contributes to the heme binding site.

The protein belongs to the cytochrome P450 family. Heme serves as cofactor.

Its subcellular location is the membrane. The protein operates within secondary metabolite biosynthesis. Involved in indole glucosinolate biosynthesis. Catalyzes hydroxylation reactions of the glucosinolate indole ring. Converts indol-3-yl-methylglucosinolate (I3M) to 4-hydroxy-indol-3-yl-methylglucosinolate (4OH-I3M) and/or 1-hydroxy-indol-3-yl-methylglucosinolate (1OH-I3M) intermediates. These hydroxy intermediates are converted to 4-methoxy-indol-3-yl-methylglucosinolate (4MO-I3M) and 1-methoxy-indol-3-yl-methylglucosinolate (1MO-I3M) by indole glucosinolate methyltransferase 1 and 2 (IGMT1 and IGMT2). Contributes to defense against the green peach aphid (Myzus persicae), a generalist phloem-feeding herbivore. Required for the biosynthesis of antifungal indole glucosinolate metabolites. Required for the pathogen-induced accumulation of 4MO-I3M, which in turn is activated by the atypical BGLU26/PEN2 myrosinase. Required for the biosynthesis of Trp-derived antifungal compounds and non-host resistance to the necrotrophic fungal pathogen Plectosphaerella cucumerina. Required for resistance to the non-adapted fungal pathogen Colletotrichum gloeosporioides. The polypeptide is Cytochrome P450 81F2 (Arabidopsis thaliana (Mouse-ear cress)).